Here is a 237-residue protein sequence, read N- to C-terminus: Ly6/PLAUR domain-containing protein 8 (237 aa).

The first 19 residues, 1–19 (MKGILVAGITAVLVAAVES), serve as a signal peptide directing secretion. Residues Asn-45, Asn-73, Asn-107, Asn-118, Asn-132, Asn-172, Asn-175, and Asn-185 are each glycosylated (N-linked (GlcNAc...) asparagine). One can recognise a UPAR/Ly6 domain in the interval 125 to 176 (CPACYESNGTSCHGKPWKCYEEEQCVFLVAELKNDIESKSLVLKGCSNVSNA). Asn-215 carries the GPI-anchor amidated asparagine lipid modification. Positions 216-237 (VGSKASLYLLALASLLLRGLLP) are cleaved as a propeptide — removed in mature form.

Belongs to the CNF-like-inhibitor family. Highly N-glycosylated. Not O-glycosylated. In terms of processing, GPI-anchored. The GPI-anchor is cleaved, leading to secretion into the colonic lumen. In terms of tissue distribution, expressed in the large intestine. Preferentially expressed on the epithelial layer exposed to the lumen (at protein level).

Its subcellular location is the cell membrane. The protein resides in the secreted. Its function is as follows. Secreted protein specifically required to prevent invasion of Gram-negative bacteria in the inner mucus layer of the colon epithelium, a portion of the large intestine which is free of commensal microbiota. Prevents invasion of flagellated microbiota by binding to the flagellum of bacteria, such as P.mirabilis, thereby inhibiting bacterial motility in the intestinal lumen. Segregation of intestinal bacteria and epithelial cells in the colon is required to preserve intestinal homeostasis. The polypeptide is Ly6/PLAUR domain-containing protein 8 (Homo sapiens (Human)).